Here is a 116-residue protein sequence, read N- to C-terminus: Peptidyl-tRNA hydrolase (116 aa).

Belongs to the PTH2 family.

Its subcellular location is the cytoplasm. The enzyme catalyses an N-acyl-L-alpha-aminoacyl-tRNA + H2O = an N-acyl-L-amino acid + a tRNA + H(+). In terms of biological role, the natural substrate for this enzyme may be peptidyl-tRNAs which drop off the ribosome during protein synthesis. This Methanopyrus kandleri (strain AV19 / DSM 6324 / JCM 9639 / NBRC 100938) protein is Peptidyl-tRNA hydrolase.